The sequence spans 140 residues: Probable NADH dehydrogenase [ubiquinone] iron-sulfur protein 6, mitochondrial (140 aa).

It belongs to the complex I NDUFS6 subunit family. Complex I is composed of 45 different subunits. This is a component of the iron-sulfur (IP) fragment of the enzyme.

The protein resides in the mitochondrion inner membrane. Its function is as follows. Accessory subunit of the mitochondrial membrane respiratory chain NADH dehydrogenase (Complex I), that is believed not to be involved in catalysis. Complex I functions in the transfer of electrons from NADH to the respiratory chain. The immediate electron acceptor for the enzyme is believed to be ubiquinone. This chain is Probable NADH dehydrogenase [ubiquinone] iron-sulfur protein 6, mitochondrial (nduf-6), found in Caenorhabditis elegans.